The primary structure comprises 311 residues: Pantothenate kinase (311 aa).

93 to 100 (GSVAVGKS) contributes to the ATP binding site.

The protein belongs to the prokaryotic pantothenate kinase family.

The protein resides in the cytoplasm. The enzyme catalyses (R)-pantothenate + ATP = (R)-4'-phosphopantothenate + ADP + H(+). The protein operates within cofactor biosynthesis; coenzyme A biosynthesis; CoA from (R)-pantothenate: step 1/5. The chain is Pantothenate kinase (coaA) from Haemophilus influenzae (strain ATCC 51907 / DSM 11121 / KW20 / Rd).